A 66-amino-acid polypeptide reads, in one-letter code: Large ribosomal subunit protein uL29 (66 aa).

It belongs to the universal ribosomal protein uL29 family.

The chain is Large ribosomal subunit protein uL29 from Thermococcus onnurineus (strain NA1).